We begin with the raw amino-acid sequence, 174 residues long: uncharacterized protein (174 aa).

The next 2 helical transmembrane spans lie at 29 to 51 and 66 to 83; these read FAVE…GFWY and VIVI…VTKI.

Its subcellular location is the cell membrane. This is an uncharacterized protein from Bacillus subtilis (strain 168).